We begin with the raw amino-acid sequence, 187 residues long: Endoribonuclease YbeY (187 aa).

Zn(2+)-binding residues include histidine 151, histidine 155, and histidine 161.

This sequence belongs to the endoribonuclease YbeY family. Zn(2+) serves as cofactor.

The protein resides in the cytoplasm. Functionally, single strand-specific metallo-endoribonuclease involved in late-stage 70S ribosome quality control and in maturation of the 3' terminus of the 16S rRNA. The chain is Endoribonuclease YbeY from Prochlorococcus marinus (strain MIT 9313).